Reading from the N-terminus, the 325-residue chain is Small ribosomal subunit biogenesis GTPase RsgA (325 aa).

The CP-type G domain occupies 80–241; that stretch reads LSKQIHIIAS…IIDTPGIKGF (162 aa). Residues 129–132 and 183–191 contribute to the GTP site; these read NKID and GHSGVGKST. Zn(2+) is bound by residues Cys265, Cys270, His272, and Cys278.

The protein belongs to the TRAFAC class YlqF/YawG GTPase family. RsgA subfamily. Monomer. Associates with 30S ribosomal subunit, binds 16S rRNA. Zn(2+) serves as cofactor.

The protein localises to the cytoplasm. One of several proteins that assist in the late maturation steps of the functional core of the 30S ribosomal subunit. Helps release RbfA from mature subunits. May play a role in the assembly of ribosomal proteins into the subunit. Circularly permuted GTPase that catalyzes slow GTP hydrolysis, GTPase activity is stimulated by the 30S ribosomal subunit. The sequence is that of Small ribosomal subunit biogenesis GTPase RsgA from Flavobacterium johnsoniae (strain ATCC 17061 / DSM 2064 / JCM 8514 / BCRC 14874 / CCUG 350202 / NBRC 14942 / NCIMB 11054 / UW101) (Cytophaga johnsonae).